We begin with the raw amino-acid sequence, 1021 residues long: MGKGVGRDKYEPAAVSEHGDKKKAKKERDMDELKKEVSMDDHKLSLDELHRKYGTDLSRGLTTARAAEILARDGPNALTPPPTTPEWVKFCRQLFGGFSMLLWIGAILCFLAYGIQAATEEEPQNDNLYLGVVLSAVVIITGCFSYYQEAKSSKIMESFKNMVPQQALVIRNGEKMSINAEEVVIGDLVEVKGGDRIPADLRIISANGCKVDNSSLTGESEPQTRSPDFTNENPLETRNIAFFSTNCVKGTARGIVVYTGDRTVMGRIATLASGLEGGQTPIAAEIEHFIHIITGVAVFLGVSFFILSLILEYTWLEAVIFLIGIIVANVPEGLLATVTVCLTLTAKRMARKNCLVKNLEAVETLGSTSTICSDKTGTLTQNRMTVAHMWFDNQIHEADTTENQSGVSFDKSSATWLALSRIAGLCNRAVFQANQENLPILKRAVAGDASESALLKCIELCCGSVKEMRDRYAKIVEIPFNSTNKYQLSIHKNPNTSEPRHLLVMKGAPERILDRCSSILLHGKEQPLDEELKDALQNAYLELGGLGERVLGFRHLFLPDEQFPEGFQFDTDDVNFPVENLCFVGFISMIGPPRAAVPDAVGKCRGAGIKVIMVTGDHPITAKAIAKGAGIISEGNETVEDIAARLNIPVRQVNPRDAKACVVHGSDLKDMTSEQLDGILKYHTEIVFARTSPQQKLIIVEGCQRQGAIVAVTGDGVNDSPALKKADIGVAMGIVGSDASKQAADMILLDDNFASIVTGVEEGRLIFDNLKKSIAYTLTSNIPEITPFLIFIIANIPLPLGTVTILCIDLGTDMVPAISLAYEQAESDIMKRQPRNPKTDKLVNERLISMAYGQIGMIQALGGFFTYFVILAENGFLPTHLLGLRVDWDDRWINDVEDSYGQQWTYEQRKIVEFTCHTAFFVSIVVVQWADLVICKTRRNSVFQQGMKNKILIFGLFEETALAAFLSYCPGMGVALRMYPLKPTWWFCAFPYSLLIFVYDEVRKLIIRRRPGGWVEKETYY.

Residues 1–5 (MGKGV) constitute a propeptide that is removed on maturation. Basic and acidic residues predominate over residues 1-11 (MGKGVGRDKYE). The interval 1-36 (MGKGVGRDKYEPAAVSEHGDKKKAKKERDMDELKKE) is disordered. The Cytoplasmic segment spans residues 4–85 (GVGRDKYEPA…NALTPPPTTP (82 aa)). K9 carries the post-translational modification N6-acetyllysine. A Phosphotyrosine modification is found at Y10. A Phosphoserine; by PKC modification is found at S16. At K21 the chain carries N6-acetyllysine. Positions 26–36 (KERDMDELKKE) are enriched in basic and acidic residues. A phosphoserine mark is found at S38 and S45. A phosphoinositide-3 kinase binding region spans residues 80 to 82 (PPP). A helical transmembrane segment spans residues 86 to 106 (EWVKFCRQLFGGFSMLLWIGA). Residues 107–129 (ILCFLAYGIQAATEEEPQNDNLY) lie on the Extracellular side of the membrane. A helical transmembrane segment spans residues 130–150 (LGVVLSAVVIITGCFSYYQEA). Residues 151–286 (KSSKIMESFK…GGQTPIAAEI (136 aa)) lie on the Cytoplasmic side of the membrane. The disordered stretch occupies residues 214–233 (SSLTGESEPQTRSPDFTNEN). S226 carries the phosphoserine modification. Y258 carries the phosphotyrosine modification. A helical membrane pass occupies residues 287–306 (EHFIHIITGVAVFLGVSFFI). The Extracellular segment spans residues 307 to 318 (LSLILEYTWLEA). The helical transmembrane segment at 319–336 (VIFLIGIIVANVPEGLLA) threads the bilayer. At 337-770 (TVTVCLTLTA…EEGRLIFDNL (434 aa)) the chain is on the cytoplasmic side. D374 acts as the 4-aspartylphosphate intermediate in catalysis. Phosphoserine occurs at positions 450 and 482. K485 is a binding site for ATP. Residue Y540 is modified to Phosphotyrosine. The mediates interaction with SCN7A stretch occupies residues 594-715 (RAAVPDAVGK…QGAIVAVTGD (122 aa)). K659 carries the N6-succinyllysine modification. Phosphoserine occurs at positions 666 and 673. Residues D715 and D719 each coordinate Mg(2+). Residues 771-790 (KKSIAYTLTSNIPEITPFLI) form a helical membrane-spanning segment. The Extracellular portion of the chain corresponds to 791–800 (FIIANIPLPL). The helical transmembrane segment at 801 to 821 (GTVTILCIDLGTDMVPAISLA) threads the bilayer. Over 822-841 (YEQAESDIMKRQPRNPKTDK) the chain is Cytoplasmic. Residues 842 to 864 (LVNERLISMAYGQIGMIQALGGF) form a helical membrane-spanning segment. At 865 to 916 (FTYFVILAENGFLPTHLLGLRVDWDDRWINDVEDSYGQQWTYEQRKIVEFTC) the chain is on the extracellular side. A helical transmembrane segment spans residues 917-936 (HTAFFVSIVVVQWADLVICK). Residues 937–949 (TRRNSVFQQGMKN) lie on the Cytoplasmic side of the membrane. S941 bears the Phosphoserine; by PKA mark. Residues 950 to 968 (KILIFGLFEETALAAFLSY) form a helical membrane-spanning segment. Residues 969–983 (CPGMGVALRMYPLKP) are Extracellular-facing. Residues 984-1004 (TWWFCAFPYSLLIFVYDEVRK) form a helical membrane-spanning segment. The Cytoplasmic segment spans residues 1005–1021 (LIIRRRPGGWVEKETYY).

This sequence belongs to the cation transport ATPase (P-type) (TC 3.A.3) family. Type IIC subfamily. The sodium/potassium-transporting ATPase is composed of a catalytic alpha subunit, an auxiliary non-catalytic beta subunit and an additional regulatory subunit. Interacts with regulatory subunit FXYD1. Interacts with regulatory subunit FXYD3. Interacts with SIK1. Interacts with SLC35G1 and STIM1. Interacts with CLN3; this interaction regulates the sodium/potassium-transporting ATPase complex localization at the plasma membrane. Interacts with SCN7A; activates ATP1A1 P-type sodium:potassium-exchanging transporter activity which indirectly signals to nearby neurons to regulate sodium homeostasis. Post-translationally, phosphorylation on Tyr-10 modulates pumping activity. Phosphorylation of Ser-941 by PKA modulates the response of ATP1A1 to PKC. Dephosphorylation by protein phosphatase 2A (PP2A) following increases in intracellular sodium, leading to increase catalytic activity.

It is found in the cell membrane. The protein localises to the basolateral cell membrane. The protein resides in the sarcolemma. Its subcellular location is the cell projection. It localises to the axon. It is found in the melanosome. It catalyses the reaction K(+)(out) + Na(+)(in) + ATP + H2O = K(+)(in) + Na(+)(out) + ADP + phosphate + H(+). Its function is as follows. This is the catalytic component of the active enzyme, which catalyzes the hydrolysis of ATP coupled with the exchange of sodium and potassium ions across the plasma membrane. This action creates the electrochemical gradient of sodium and potassium ions, providing the energy for active transport of various nutrients. Could also be part of an osmosensory signaling pathway that senses body-fluid sodium levels and controls salt intake behavior as well as voluntary water intake to regulate sodium homeostasis. The chain is Sodium/potassium-transporting ATPase subunit alpha-1 (ATP1A1) from Canis lupus familiaris (Dog).